The primary structure comprises 355 residues: N-acetyl-gamma-glutamyl-phosphate reductase (355 aa).

Cys152 is a catalytic residue.

The protein belongs to the NAGSA dehydrogenase family. Type 1 subfamily.

The protein resides in the cytoplasm. The catalysed reaction is N-acetyl-L-glutamate 5-semialdehyde + phosphate + NADP(+) = N-acetyl-L-glutamyl 5-phosphate + NADPH + H(+). It functions in the pathway amino-acid biosynthesis; L-arginine biosynthesis; N(2)-acetyl-L-ornithine from L-glutamate: step 3/4. Its function is as follows. Catalyzes the NADPH-dependent reduction of N-acetyl-5-glutamyl phosphate to yield N-acetyl-L-glutamate 5-semialdehyde. The protein is N-acetyl-gamma-glutamyl-phosphate reductase of Psychrobacter cryohalolentis (strain ATCC BAA-1226 / DSM 17306 / VKM B-2378 / K5).